Here is a 1240-residue protein sequence, read N- to C-terminus: DNA polymerase catalytic subunit (1240 aa).

Over residues 1–26 (MFCAAGGPASPGGKSAARAASGFFAP) the composition is skewed to low complexity. 3 disordered regions span residues 1–65 (MFCA…PAQR), 646–695 (GLDK…RETG), and 1103–1139 (AAAP…ASKP). The segment covering 44–56 (NFYNPHLAQTGTQ) has biased composition (polar residues). Over residues 669-688 (NGDEDKDDDEDGDEDGDERE) the composition is skewed to acidic residues.

Belongs to the DNA polymerase type-B family. As to quaternary structure, forms a complex with the ssDNA-binding protein UL29, the DNA polymerase processivity factor, and the alkaline exonuclease. Interacts with the putative helicase-primase complex subunit UL8; this interaction may coordinate leading and lagging strand DNA synthesis at the replication fork.

The protein resides in the host nucleus. The enzyme catalyses DNA(n) + a 2'-deoxyribonucleoside 5'-triphosphate = DNA(n+1) + diphosphate. It catalyses the reaction Endonucleolytic cleavage to 5'-phosphomonoester.. In terms of biological role, replicates viral genomic DNA. The replication complex is composed of six viral proteins: the DNA polymerase, processivity factor, primase, primase-associated factor, helicase, and ssDNA-binding protein. Additionally, the polymerase contains an intrinsic ribonuclease H (RNase H) activity that specifically degrades RNA/DNA heteroduplexes or duplex DNA substrates in the 5' to 3' direction. Therefore, it can catalyze the excision of the RNA primers that initiate the synthesis of Okazaki fragments at a replication fork during viral DNA replication. The polypeptide is DNA polymerase catalytic subunit (Human herpesvirus 2 (strain 186) (HHV-2)).